Consider the following 640-residue polypeptide: Protelomerase (640 aa).

Positions 275, 300, 383, and 416 each coordinate DNA. Tyr425 serves as the catalytic Nucleophile. Residues 545 to 585 (VDLDDENHDDETLDDDEIEVDESEGEELEEAGDAEEAEVAE) are compositionally biased toward acidic residues. Residues 545-605 (VDLDDENHDD…FKAPRDNGDG (61 aa)) are disordered.

The protein belongs to the Caudoviricetes Protelomerase family. In terms of assembly, monomer. Homodimer; in presence of DNA.

Converts the circular intermediates produced by the viral replication and carrying a joined telomere site to a linear DNA molecule with covalently closed hairpin ends. The viral circular DNA is cleaved at a palindromic site called telRL thereby generating a linear prophage plasmid with telomeres. Binds covalently to the 3'-phosphoryl of the cleaved strands. The sequence is that of Protelomerase from Klebsiella oxytoca (Bacteriophage phiKO2).